Reading from the N-terminus, the 417-residue chain is L-rhamnose isomerase (417 aa).

Positions 261, 293, and 295 each coordinate Mn(2+).

The protein belongs to the rhamnose isomerase family. Requires Mn(2+) as cofactor.

Its subcellular location is the cytoplasm. It carries out the reaction L-rhamnopyranose = L-rhamnulose. It functions in the pathway carbohydrate degradation; L-rhamnose degradation; glycerone phosphate from L-rhamnose: step 1/3. In terms of biological role, catalyzes the interconversion of L-rhamnose and L-rhamnulose. The chain is L-rhamnose isomerase from Oceanobacillus iheyensis (strain DSM 14371 / CIP 107618 / JCM 11309 / KCTC 3954 / HTE831).